The primary structure comprises 223 residues: Ubiquitin carboxyl-terminal hydrolase isozyme L1 (223 aa).

N-acetylmethionine is present on methionine 1. A UCH catalytic domain is found at 2–221 (QLKPMEINPE…VRFSAVALCK (220 aa)). An interaction with ubiquitin region spans residues 5-10 (PMEINP). Residue cysteine 90 is the Nucleophile of the active site. Serine 125 carries the phosphoserine modification. Histidine 161 acts as the Proton donor in catalysis. The tract at residues 211 to 216 (EVRFSA) is interaction with ubiquitin. Cysteine 220 is lipidated: S-farnesyl cysteine. Residues 221–223 (KAA) constitute a propeptide, removed in mature form.

This sequence belongs to the peptidase C12 family. As to quaternary structure, monomer. Homodimer. Interacts with SNCA. Interacts with COPS5. In terms of processing, O-glycosylated. As to expression, found in neuronal cell bodies and processes throughout the neocortex (at protein level). Expressed in neurons and cells of the diffuse neuroendocrine system and their tumors. Weakly expressed in ovary. Down-regulated in brains from Parkinson disease and Alzheimer disease patients.

It localises to the cytoplasm. Its subcellular location is the endoplasmic reticulum membrane. The enzyme catalyses Thiol-dependent hydrolysis of ester, thioester, amide, peptide and isopeptide bonds formed by the C-terminal Gly of ubiquitin (a 76-residue protein attached to proteins as an intracellular targeting signal).. Its function is as follows. Deubiquitinase that plays a role in the regulation of several processes such as maintenance of synaptic function, cardiac function, inflammatory response or osteoclastogenesis. Abrogates the ubiquitination of multiple proteins including WWTR1/TAZ, EGFR, HIF1A and beta-site amyloid precursor protein cleaving enzyme 1/BACE1. In addition, recognizes and hydrolyzes a peptide bond at the C-terminal glycine of ubiquitin to maintain a stable pool of monoubiquitin that is a key requirement for the ubiquitin-proteasome and the autophagy-lysosome pathways. Regulates amyloid precursor protein/APP processing by promoting BACE1 degradation resulting in decreased amyloid beta production. Plays a role in the immune response by regulating the ability of MHC I molecules to reach cross-presentation compartments competent for generating Ag-MHC I complexes. Mediates the 'Lys-48'-linked deubiquitination of the transcriptional coactivator WWTR1/TAZ leading to its stabilization and inhibition of osteoclastogenesis. Deubiquitinates and stabilizes epidermal growth factor receptor EGFR to prevent its degradation and to activate its downstream mediators. Modulates oxidative activity in skeletal muscle by regulating key mitochondrial oxidative proteins. Enhances the activity of hypoxia-inducible factor 1-alpha/HIF1A by abrogateing its VHL E3 ligase-mediated ubiquitination and consequently inhibiting its degradation. This Homo sapiens (Human) protein is Ubiquitin carboxyl-terminal hydrolase isozyme L1 (UCHL1).